The chain runs to 202 residues: AFG2-interacting ribosome maturation factor (202 aa).

In terms of assembly, part of the 55LCC heterohexameric ATPase complex. Does not associate with pre-60S ribosomal particles.

Its subcellular location is the nucleus. It is found in the cytoplasm. Part of the 55LCC heterohexameric ATPase complex which is chromatin-associated and promotes replisome proteostasis to maintain replication fork progression and genome stability. Required for replication fork progression, sister chromatid cohesion, and chromosome stability. The ATPase activity is specifically enhanced by replication fork DNA and is coupled to cysteine protease-dependent cleavage of replisome substrates in response to replication fork damage. Uses ATPase activity to process replisome substrates in S-phase, facilitating their proteolytic turnover from chromatin to ensure DNA replication and mitotic fidelity. Involved in the cytoplasmic maturation steps of pre-60S ribosomal particles by promoting the release of shuttling protein RSL24D1/RLP24 from the pre-ribosomal particles. Plays an essential role in early embryonic development. The chain is AFG2-interacting ribosome maturation factor (airim) from Danio rerio (Zebrafish).